The chain runs to 291 residues: tRNA dimethylallyltransferase (291 aa).

8–15 (GSTASGKT) is a binding site for ATP. 10-15 (TASGKT) contacts substrate. The interval 33–36 (DSLC) is interaction with substrate tRNA.

It belongs to the IPP transferase family. In terms of assembly, monomer. Mg(2+) serves as cofactor.

The enzyme catalyses adenosine(37) in tRNA + dimethylallyl diphosphate = N(6)-dimethylallyladenosine(37) in tRNA + diphosphate. Functionally, catalyzes the transfer of a dimethylallyl group onto the adenine at position 37 in tRNAs that read codons beginning with uridine, leading to the formation of N6-(dimethylallyl)adenosine (i(6)A). The protein is tRNA dimethylallyltransferase of Aliarcobacter butzleri (strain RM4018) (Arcobacter butzleri).